Reading from the N-terminus, the 257-residue chain is Ditrans,polycis-undecaprenyl-diphosphate synthase ((2E,6E)-farnesyl-diphosphate specific) (257 aa).

D34 is a catalytic residue. D34 is a binding site for Mg(2+). Residues 35 to 38 (GNGR), W39, R47, and H51 each bind substrate. N82 (proton acceptor) is an active-site residue. Substrate-binding positions include W83, R85, R201, and 207–209 (RLS). E220 contacts Mg(2+).

The protein belongs to the UPP synthase family. As to quaternary structure, homodimer. Requires Mg(2+) as cofactor.

The enzyme catalyses 8 isopentenyl diphosphate + (2E,6E)-farnesyl diphosphate = di-trans,octa-cis-undecaprenyl diphosphate + 8 diphosphate. In terms of biological role, catalyzes the sequential condensation of isopentenyl diphosphate (IPP) with (2E,6E)-farnesyl diphosphate (E,E-FPP) to yield (2Z,6Z,10Z,14Z,18Z,22Z,26Z,30Z,34E,38E)-undecaprenyl diphosphate (di-trans,octa-cis-UPP). UPP is the precursor of glycosyl carrier lipid in the biosynthesis of bacterial cell wall polysaccharide components such as peptidoglycan and lipopolysaccharide. The chain is Ditrans,polycis-undecaprenyl-diphosphate synthase ((2E,6E)-farnesyl-diphosphate specific) from Francisella tularensis subsp. tularensis (strain SCHU S4 / Schu 4).